The following is a 61-amino-acid chain: UPF0434 protein Pmen_1615 (61 aa).

It belongs to the UPF0434 family.

The polypeptide is UPF0434 protein Pmen_1615 (Ectopseudomonas mendocina (strain ymp) (Pseudomonas mendocina)).